A 357-amino-acid polypeptide reads, in one-letter code: Elongation factor Ts (357 aa).

An involved in Mg(2+) ion dislocation from EF-Tu region spans residues 82–85 (TDFV).

It belongs to the EF-Ts family.

Its subcellular location is the cytoplasm. Its function is as follows. Associates with the EF-Tu.GDP complex and induces the exchange of GDP to GTP. It remains bound to the aminoacyl-tRNA.EF-Tu.GTP complex up to the GTP hydrolysis stage on the ribosome. This chain is Elongation factor Ts, found in Campylobacter jejuni subsp. jejuni serotype O:2 (strain ATCC 700819 / NCTC 11168).